Consider the following 208-residue polypeptide: Myosin light chain 6B (208 aa).

The tract at residues 1 to 51 (MPPKKDVPVKKPAGPSISKPAAKPAAAGAPPAKTKAEPAVPQAPQKTQEPP) is disordered. Positions 10–40 (KKPAGPSISKPAAKPAAAGAPPAKTKAEPAV) are enriched in low complexity. EF-hand domains follow at residues 64–99 (DQLEEFKEAFELFDRVGDGKILYSQCGDVMRALGQN), 141–176 (GTYEDYLEGFRVFDKEGNGKVMGAELRHVLTTLGEK), and 176–208 (KMTEEEVETVLAGHEDSNGCINYEAFLKHILSV).

As to quaternary structure, myosin is a hexamer of 2 heavy chains and 4 light chains.

Its function is as follows. Regulatory light chain of myosin. Does not bind calcium. The polypeptide is Myosin light chain 6B (MYL6B) (Homo sapiens (Human)).